A 215-amino-acid polypeptide reads, in one-letter code: Cytochrome b6 (215 aa).

A helical transmembrane segment spans residues 32-52 (IFYCLGGITFTSFLVQVATGF). Cysteine 35 is a heme c binding site. Heme b is bound by residues histidine 86 and histidine 100. 3 consecutive transmembrane segments (helical) span residues 90 to 110 (ASMM…TGGF), 116 to 136 (LTWV…VTGY), and 186 to 206 (LHTF…FLMI). Heme b contacts are provided by histidine 187 and histidine 202.

It belongs to the cytochrome b family. PetB subfamily. In terms of assembly, the 4 large subunits of the cytochrome b6-f complex are cytochrome b6, subunit IV (17 kDa polypeptide, PetD), cytochrome f and the Rieske protein, while the 4 small subunits are PetG, PetL, PetM and PetN. The complex functions as a dimer. Heme b serves as cofactor. It depends on heme c as a cofactor.

The protein resides in the plastid. It is found in the chloroplast thylakoid membrane. In terms of biological role, component of the cytochrome b6-f complex, which mediates electron transfer between photosystem II (PSII) and photosystem I (PSI), cyclic electron flow around PSI, and state transitions. The polypeptide is Cytochrome b6 (Oltmannsiellopsis viridis (Marine flagellate)).